The sequence spans 300 residues: E3 ubiquitin-protein ligase RNF212B (300 aa).

An RING-type zinc finger spans residues 6–40; it reads CNQCFRKDGAHFFVTSCGHIFCKKCVTLEKCAVCG. Residues 88–124 adopt a coiled-coil conformation; sequence LIAFYKHRITKLETAMQETQQALVSQDKELSVLRKEN. Disordered regions lie at residues 141–251 and 280–300; these read YQGS…HTRV and PYQQ…TTSR. Positions 155 to 169 are enriched in polar residues; the sequence is TSPSQSVTPRPSFQH. Positions 170–183 are enriched in low complexity; it reads SSQVVSRSSSVESV. Gly residues predominate over residues 191–200; it reads GSLGQGGRGL. The segment covering 211–234 has biased composition (polar residues); that stretch reads NETPSPASTHSLSYRPSSASSGQG.

Homodimer. Post-translationally, autoubiquitinated.

The protein resides in the chromosome. The enzyme catalyses S-ubiquitinyl-[E2 ubiquitin-conjugating enzyme]-L-cysteine + [acceptor protein]-L-lysine = [E2 ubiquitin-conjugating enzyme]-L-cysteine + N(6)-ubiquitinyl-[acceptor protein]-L-lysine.. The protein operates within protein modification; protein ubiquitination. Ubiquitin E3 ligase that acts as a crucial factor for crossing-over (CO) formation during meiosis. Essential for normal prophase I progression and for ensuring appropriate CO designation in meiosis. Recruits key components of the cross-over machinery either directly ou indirectly, leading to the activation of the MutL-gamma complex. The function of RNF212B in CO designation is dependent on its catalytic activity. In Pongo abelii (Sumatran orangutan), this protein is E3 ubiquitin-protein ligase RNF212B (RNF212B).